Here is a 281-residue protein sequence, read N- to C-terminus: Apulose-4-phosphate transketolase subunit A (281 aa).

The protein belongs to the transketolase family. As to quaternary structure, probable heterodimer composed of AptA and AptB. It depends on thiamine diphosphate as a cofactor.

The enzyme catalyses apulose 4-phosphate + D-glyceraldehyde 3-phosphate = D-xylulose 5-phosphate + dihydroxyacetone phosphate. It participates in carbohydrate metabolism. Functionally, involved in catabolism of D-apiose. Catalyzes the transfer of the glycolaldehyde group from apulose-4-phosphate to D-glyceraldehyde 3-phosphate, generating dihydroxyacetone phosphate and D-xylulose-5-phosphate. This Phocaeicola vulgatus (strain ATCC 8482 / DSM 1447 / JCM 5826 / CCUG 4940 / NBRC 14291 / NCTC 11154) (Bacteroides vulgatus) protein is Apulose-4-phosphate transketolase subunit A.